A 249-amino-acid chain; its full sequence is Diaminopimelate epimerase (249 aa).

Positions 11 and 60 each coordinate substrate. C69 (proton donor) is an active-site residue. Residues 70 to 71, N164, and 182 to 183 each bind substrate; these read GN and ER. C192 (proton acceptor) is an active-site residue. 193–194 serves as a coordination point for substrate; that stretch reads GT.

Belongs to the diaminopimelate epimerase family. As to quaternary structure, homodimer.

It is found in the cytoplasm. It catalyses the reaction (2S,6S)-2,6-diaminopimelate = meso-2,6-diaminopimelate. It participates in amino-acid biosynthesis; L-lysine biosynthesis via DAP pathway; DL-2,6-diaminopimelate from LL-2,6-diaminopimelate: step 1/1. Functionally, catalyzes the stereoinversion of LL-2,6-diaminopimelate (L,L-DAP) to meso-diaminopimelate (meso-DAP), a precursor of L-lysine and an essential component of the bacterial peptidoglycan. The sequence is that of Diaminopimelate epimerase from Campylobacter jejuni subsp. jejuni serotype O:23/36 (strain 81-176).